An 803-amino-acid chain; its full sequence is Subtilisin-like protease SBT5.5 (803 aa).

The N-terminal stretch at 1-22 (MKRIFGIFIFLSLLLFLVPLLA) is a signal peptide. The propeptide at 23–112 (SCTKEKQVYI…KSDPRKYKIH (90 aa)) is activation peptide. Positions 30-108 (VYIVYFGEHK…VSVFKSDPRK (79 aa)) constitute an Inhibitor I9 domain. Residues 140-656 (KYDVNDRFRV…SRHFRPTKAA (517 aa)) form the Peptidase S8 domain. The active-site Charge relay system is the Asp169. Asn202 is a glycosylation site (N-linked (GlcNAc...) asparagine). His244 functions as the Charge relay system in the catalytic mechanism. In terms of domain architecture, PA spans 409-504 (YAPLVYAPDV…VFSSTVDRIL (96 aa)). Ser589 serves as the catalytic Charge relay system. Asn725 carries an N-linked (GlcNAc...) asparagine glycan.

It belongs to the peptidase S8 family.

The protein localises to the secreted. The polypeptide is Subtilisin-like protease SBT5.5 (Arabidopsis thaliana (Mouse-ear cress)).